A 151-amino-acid polypeptide reads, in one-letter code: Ribosome maturation factor RimP (151 aa).

Belongs to the RimP family.

Its subcellular location is the cytoplasm. In terms of biological role, required for maturation of 30S ribosomal subunits. In Shewanella oneidensis (strain ATCC 700550 / JCM 31522 / CIP 106686 / LMG 19005 / NCIMB 14063 / MR-1), this protein is Ribosome maturation factor RimP.